We begin with the raw amino-acid sequence, 245 residues long: MIKLVLIRHGQSLWNLENRFTGWTDVDLSKNGLSEAREAGTILKKNGYTFDVAYTSVLKRAIRTLWIVLHEMDLTWVPIHNSWKLNERHYGALQGLNKDETAKKYGDEQVHIWRRSIDVRPPALTEDDPRYEANNPRYKTLKKDEFPLTECLEDTEKRVVDYWHSEIVPSLKSGEKVIISSHGNTIRSLVKYLDNLSSDGVVSLNIPTSIPLVYELDEKLRPIRHYYLSMDGEVPEGEIPKHISF.

Residues 8 to 15, 21 to 22, Arg-60, 87 to 90, Lys-98, 114 to 115, and 183 to 184 each bind substrate; these read RHGQSLWN, TG, ERHY, RR, and GN. The Tele-phosphohistidine intermediate role is filled by His-9. Residue Glu-87 is the Proton donor/acceptor of the active site.

The protein belongs to the phosphoglycerate mutase family. BPG-dependent PGAM subfamily.

The catalysed reaction is (2R)-2-phosphoglycerate = (2R)-3-phosphoglycerate. The protein operates within carbohydrate degradation; glycolysis; pyruvate from D-glyceraldehyde 3-phosphate: step 3/5. Catalyzes the interconversion of 2-phosphoglycerate and 3-phosphoglycerate. The polypeptide is 2,3-bisphosphoglycerate-dependent phosphoglycerate mutase (Bacillus mycoides (strain KBAB4) (Bacillus weihenstephanensis)).